The sequence spans 297 residues: Acetyl-coenzyme A carboxylase carboxyl transferase subunit beta (297 aa).

Residues 27-296 (LWHKCPSCEA…PVETSQVTAK (270 aa)) enclose the CoA carboxyltransferase N-terminal domain. The Zn(2+) site is built by Cys-31, Cys-34, Cys-50, and Cys-53. The C4-type zinc finger occupies 31 to 53 (CPSCEAVLYRPELEKTLDVCPKC).

Belongs to the AccD/PCCB family. In terms of assembly, acetyl-CoA carboxylase is a heterohexamer composed of biotin carboxyl carrier protein (AccB), biotin carboxylase (AccC) and two subunits each of ACCase subunit alpha (AccA) and ACCase subunit beta (AccD). It depends on Zn(2+) as a cofactor.

The protein resides in the cytoplasm. It carries out the reaction N(6)-carboxybiotinyl-L-lysyl-[protein] + acetyl-CoA = N(6)-biotinyl-L-lysyl-[protein] + malonyl-CoA. Its pathway is lipid metabolism; malonyl-CoA biosynthesis; malonyl-CoA from acetyl-CoA: step 1/1. Component of the acetyl coenzyme A carboxylase (ACC) complex. Biotin carboxylase (BC) catalyzes the carboxylation of biotin on its carrier protein (BCCP) and then the CO(2) group is transferred by the transcarboxylase to acetyl-CoA to form malonyl-CoA. This chain is Acetyl-coenzyme A carboxylase carboxyl transferase subunit beta, found in Stutzerimonas stutzeri (strain A1501) (Pseudomonas stutzeri).